The following is a 208-amino-acid chain: Small ribosomal subunit protein eS8 (208 aa).

The segment at 1–37 (MGISRDNWHKRRKTGGKRKPYHKKRKYEPGRPAANTK) is disordered. Residues 8 to 26 (WHKRRKTGGKRKPYHKKRK) are compositionally biased toward basic residues.

It belongs to the eukaryotic ribosomal protein eS8 family. In terms of assembly, component of the small ribosomal subunit. Identified in a IGF2BP1-dependent mRNP granule complex containing untranslated mRNAs. Part of the small subunit (SSU) processome, composed of more than 70 proteins and the RNA chaperone small nucleolar RNA (snoRNA) U3.

The protein resides in the cytoplasm. The protein localises to the membrane. It is found in the nucleus. Its subcellular location is the nucleolus. Component of the small ribosomal subunit. The ribosome is a large ribonucleoprotein complex responsible for the synthesis of proteins in the cell. Part of the small subunit (SSU) processome, first precursor of the small eukaryotic ribosomal subunit. During the assembly of the SSU processome in the nucleolus, many ribosome biogenesis factors, an RNA chaperone and ribosomal proteins associate with the nascent pre-rRNA and work in concert to generate RNA folding, modifications, rearrangements and cleavage as well as targeted degradation of pre-ribosomal RNA by the RNA exosome. The chain is Small ribosomal subunit protein eS8 (rps8) from Xenopus laevis (African clawed frog).